A 300-amino-acid polypeptide reads, in one-letter code: Bifunctional protein FolD (300 aa).

NADP(+)-binding positions include 169-171 (GRG), Ser-196, and Ile-237.

It belongs to the tetrahydrofolate dehydrogenase/cyclohydrolase family. In terms of assembly, homodimer.

It carries out the reaction (6R)-5,10-methylene-5,6,7,8-tetrahydrofolate + NADP(+) = (6R)-5,10-methenyltetrahydrofolate + NADPH. It catalyses the reaction (6R)-5,10-methenyltetrahydrofolate + H2O = (6R)-10-formyltetrahydrofolate + H(+). It functions in the pathway one-carbon metabolism; tetrahydrofolate interconversion. In terms of biological role, catalyzes the oxidation of 5,10-methylenetetrahydrofolate to 5,10-methenyltetrahydrofolate and then the hydrolysis of 5,10-methenyltetrahydrofolate to 10-formyltetrahydrofolate. The polypeptide is Bifunctional protein FolD (Clavibacter michiganensis subsp. michiganensis (strain NCPPB 382)).